A 216-amino-acid polypeptide reads, in one-letter code: MRLILLGPPGAGKGTQAQRIVEKHGIPQLSTGDMLRAAVNAGTEVGKRAKAVMDAGKLVSDEIVIAIVSERIDQPDCANGFILDGFPRTLVQADATEAMLKAKGLDLSVVIEFRVDDEELVRRVDGRYTCAQCGTVYHDTDKVPVEEGVCDKCGSTHFKRRPDDNAETMIKRLEVYYKETSPLIGYYHAKGKLRPVDGMAEIDQVTAEVEAILSKL.

10 to 15 contacts ATP; sequence GAGKGT. The segment at 30-59 is NMP; that stretch reads STGDMLRAAVNAGTEVGKRAKAVMDAGKLV. AMP is bound by residues T31, R36, 57 to 59, 85 to 88, and Q92; these read KLV and GFPR. The interval 126-163 is LID; sequence GRYTCAQCGTVYHDTDKVPVEEGVCDKCGSTHFKRRPD. R127 contacts ATP. Zn(2+) is bound by residues C130 and C133. 136–137 serves as a coordination point for ATP; sequence VY. Zn(2+)-binding residues include C150 and C153. AMP is bound by residues R160 and R172. Residue A200 participates in ATP binding.

It belongs to the adenylate kinase family. As to quaternary structure, monomer.

The protein localises to the cytoplasm. The enzyme catalyses AMP + ATP = 2 ADP. It functions in the pathway purine metabolism; AMP biosynthesis via salvage pathway; AMP from ADP: step 1/1. Its function is as follows. Catalyzes the reversible transfer of the terminal phosphate group between ATP and AMP. Plays an important role in cellular energy homeostasis and in adenine nucleotide metabolism. The chain is Adenylate kinase from Rhizobium etli (strain ATCC 51251 / DSM 11541 / JCM 21823 / NBRC 15573 / CFN 42).